We begin with the raw amino-acid sequence, 430 residues long: Zinc finger CCCH domain-containing protein 48 (430 aa).

2 disordered regions span residues 1-27 (MDLD…TTDS) and 56-90 (GSGP…GTAN). The C3H1-type 1 zinc finger occupies 26-52 (DSNQKVCFHWRAGRCNRYPCPYLHREL). The C3H1-type 2 zinc-finger motif lies at 102–129 (TKTEKLCKFWVDGNCPYGDKCRYLHCWS). WD repeat units follow at residues 142 to 183 (GHQK…GVLN), 221 to 258 (GPVG…SCFD), 265 to 304 (GHTL…QTLT), 306 to 342 (HTSV…NLEV), 345 to 389 (THKE…ERGK), and 391 to 429 (LAKQ…TPIL).

The polypeptide is Zinc finger CCCH domain-containing protein 48 (ZFWD1) (Arabidopsis thaliana (Mouse-ear cress)).